A 430-amino-acid chain; its full sequence is Histidine--tRNA ligase (430 aa).

Belongs to the class-II aminoacyl-tRNA synthetase family. As to quaternary structure, homodimer.

The protein resides in the cytoplasm. The catalysed reaction is tRNA(His) + L-histidine + ATP = L-histidyl-tRNA(His) + AMP + diphosphate + H(+). This is Histidine--tRNA ligase from Chlamydia abortus (strain DSM 27085 / S26/3) (Chlamydophila abortus).